The chain runs to 121 residues: Large ribosomal subunit protein uL22 (121 aa).

Belongs to the universal ribosomal protein uL22 family. As to quaternary structure, part of the 50S ribosomal subunit.

In terms of biological role, this protein binds specifically to 23S rRNA; its binding is stimulated by other ribosomal proteins, e.g. L4, L17, and L20. It is important during the early stages of 50S assembly. It makes multiple contacts with different domains of the 23S rRNA in the assembled 50S subunit and ribosome. The globular domain of the protein is located near the polypeptide exit tunnel on the outside of the subunit, while an extended beta-hairpin is found that lines the wall of the exit tunnel in the center of the 70S ribosome. This Pseudarthrobacter chlorophenolicus (strain ATCC 700700 / DSM 12829 / CIP 107037 / JCM 12360 / KCTC 9906 / NCIMB 13794 / A6) (Arthrobacter chlorophenolicus) protein is Large ribosomal subunit protein uL22.